Reading from the N-terminus, the 48-residue chain is Delta-actitoxin-Bcg1c (48 aa).

Disulfide bonds link C4/C45, C6/C35, and C28/C46.

It localises to the secreted. The protein resides in the nematocyst. Functionally, binds specifically to voltage-gated sodium channels SCN1A/Nav1.1, thereby delaying their inactivation during signal transduction. The polypeptide is Delta-actitoxin-Bcg1c (Bunodosoma cangicum (Sea anemone)).